A 119-amino-acid chain; its full sequence is Large ribosomal subunit protein uL18 (119 aa).

Belongs to the universal ribosomal protein uL18 family. In terms of assembly, part of the 50S ribosomal subunit; part of the 5S rRNA/L5/L18/L25 subcomplex. Contacts the 5S and 23S rRNAs.

Its function is as follows. This is one of the proteins that bind and probably mediate the attachment of the 5S RNA into the large ribosomal subunit, where it forms part of the central protuberance. This chain is Large ribosomal subunit protein uL18, found in Cereibacter sphaeroides (strain ATCC 17029 / ATH 2.4.9) (Rhodobacter sphaeroides).